Reading from the N-terminus, the 116-residue chain is Large ribosomal subunit protein bL20c (116 aa).

It belongs to the bacterial ribosomal protein bL20 family.

The protein resides in the plastid. It is found in the chloroplast. Its function is as follows. Binds directly to 23S ribosomal RNA and is necessary for the in vitro assembly process of the 50S ribosomal subunit. It is not involved in the protein synthesizing functions of that subunit. The protein is Large ribosomal subunit protein bL20c (rpl20) of Marchantia polymorpha (Common liverwort).